The chain runs to 535 residues: Light-independent protochlorophyllide reductase subunit B (535 aa).

Residue D36 participates in [4Fe-4S] cluster binding. The active-site Proton donor is the D292. 428-429 (GL) is a substrate binding site. Positions 446–483 (DEASPSESAPHASNGHEDVAGGSTAQSVPSHAATEGDG) are disordered.

Belongs to the ChlB/BchB/BchZ family. As to quaternary structure, protochlorophyllide reductase is composed of three subunits; BchL, BchN and BchB. Forms a heterotetramer of two BchB and two BchN subunits. [4Fe-4S] cluster serves as cofactor.

The enzyme catalyses chlorophyllide a + oxidized 2[4Fe-4S]-[ferredoxin] + 2 ADP + 2 phosphate = protochlorophyllide a + reduced 2[4Fe-4S]-[ferredoxin] + 2 ATP + 2 H2O. Its pathway is porphyrin-containing compound metabolism; bacteriochlorophyll biosynthesis (light-independent). Its function is as follows. Component of the dark-operative protochlorophyllide reductase (DPOR) that uses Mg-ATP and reduced ferredoxin to reduce ring D of protochlorophyllide (Pchlide) to form chlorophyllide a (Chlide). This reaction is light-independent. The NB-protein (BchN-BchB) is the catalytic component of the complex. The polypeptide is Light-independent protochlorophyllide reductase subunit B (Chlorobium limicola (strain DSM 245 / NBRC 103803 / 6330)).